A 201-amino-acid chain; its full sequence is Glycerol-3-phosphate acyltransferase (201 aa).

Helical transmembrane passes span threonine 3 to serine 23, lysine 51 to valine 71, valine 85 to valine 105, valine 116 to alanine 136, tyrosine 137 to tyrosine 157, and glycine 158 to valine 178.

It belongs to the PlsY family. As to quaternary structure, probably interacts with PlsX.

The protein localises to the cell inner membrane. It catalyses the reaction an acyl phosphate + sn-glycerol 3-phosphate = a 1-acyl-sn-glycero-3-phosphate + phosphate. The protein operates within lipid metabolism; phospholipid metabolism. Functionally, catalyzes the transfer of an acyl group from acyl-phosphate (acyl-PO(4)) to glycerol-3-phosphate (G3P) to form lysophosphatidic acid (LPA). This enzyme utilizes acyl-phosphate as fatty acyl donor, but not acyl-CoA or acyl-ACP. This chain is Glycerol-3-phosphate acyltransferase, found in Janthinobacterium sp. (strain Marseille) (Minibacterium massiliensis).